The chain runs to 97 residues: Citrate lyase acyl carrier protein (97 aa).

S14 bears the O-(phosphoribosyl dephospho-coenzyme A)serine mark.

Belongs to the CitD family. Oligomer with a subunit composition of (alpha,beta,gamma)6.

It is found in the cytoplasm. Its function is as follows. Covalent carrier of the coenzyme of citrate lyase. The sequence is that of Citrate lyase acyl carrier protein from Lactobacillus acidophilus (strain ATCC 700396 / NCK56 / N2 / NCFM).